Reading from the N-terminus, the 1373-residue chain is DNA-directed RNA polymerase subunit beta (1373 aa).

Belongs to the RNA polymerase beta chain family. The RNAP catalytic core consists of 2 alpha, 1 beta, 1 beta' and 1 omega subunit. When a sigma factor is associated with the core the holoenzyme is formed, which can initiate transcription.

The catalysed reaction is RNA(n) + a ribonucleoside 5'-triphosphate = RNA(n+1) + diphosphate. DNA-dependent RNA polymerase catalyzes the transcription of DNA into RNA using the four ribonucleoside triphosphates as substrates. In Rickettsia conorii (strain ATCC VR-613 / Malish 7), this protein is DNA-directed RNA polymerase subunit beta.